The sequence spans 374 residues: Mannitol-1-phosphate 5-dehydrogenase (374 aa).

3–14 is a binding site for NAD(+); it reads AVHFGAGNIGRG.

Belongs to the mannitol dehydrogenase family.

The enzyme catalyses D-mannitol 1-phosphate + NAD(+) = beta-D-fructose 6-phosphate + NADH + H(+). This is Mannitol-1-phosphate 5-dehydrogenase from Shouchella clausii (strain KSM-K16) (Alkalihalobacillus clausii).